We begin with the raw amino-acid sequence, 292 residues long: Trimeric intracellular cation channel type B (292 aa).

Topologically, residues 1–16 are lumenal; sequence MEYPWDDLTLAFSRTS. The helical transmembrane segment at 17–34 threads the bilayer; the sequence is MFPFFDIAHYLVSVMALK. Residues 35–47 lie on the Cytoplasmic side of the membrane; sequence QRPGAVAAAWNNP. The chain crosses the membrane as a helical span at residues 48–69; sequence LASWLSAMLHCFGGGILSCMLL. The Lumenal portion of the chain corresponds to 70–82; the sequence is AESPLKFLTNHTN. A helical membrane pass occupies residues 83–100; sequence ILLASSIWYIVFFCPRDL. The Cytoplasmic portion of the chain corresponds to 101–103; that stretch reads VSQ. A helical membrane pass occupies residues 104–122; sequence GYSYQPIQFLAAGMKEVTR. The a 1,2-diacyl-sn-glycero-3-phospho-(1D-myo-inositol-4,5-bisphosphate) site is built by K118 and R122. The Lumenal portion of the chain corresponds to 123-140; that stretch reads TWKIVGGVSDANSYYRNA. A helical membrane pass occupies residues 141-158; sequence WIVMIVVGWARGAGGAVV. The Cytoplasmic segment spans residues 159-178; it reads TACEQLLKGDWKPEGDEWLK. The helical transmembrane segment at 179 to 195 threads the bilayer; the sequence is MSFPCKITLLGSIMFTF. Over 196-206 the chain is Lumenal; sequence QHTRHLAISKH. A helical transmembrane segment spans residues 207-225; sequence DLMFLYTIFLVTIKVTMMM. Residues 226–292 lie on the Cytoplasmic side of the membrane; sequence TKDTAVTLTP…GAKRHAKKED (67 aa). The disordered stretch occupies residues 248-292; that stretch reads RQQQQFSSSEKKTEVKPSSNGSASSASKRGAEPSGGAKRHAKKED. Positions 265 to 274 are enriched in low complexity; the sequence is SSNGSASSAS.

The protein belongs to the TMEM38 family. In terms of assembly, homotrimer; conformation seems to be controled by binding to diacylglycerol (DAG). As to expression, widely expressed.

The protein resides in the endoplasmic reticulum membrane. It catalyses the reaction K(+)(in) = K(+)(out). With respect to regulation, channel activity is activated by increased cytosolic Ca(2+) levels and blocked by luminal high Ca(2+) levels. Functionally, intracellular monovalent cation channel required for maintenance of rapid intracellular calcium release. Acts as a potassium counter-ion channel that functions in synchronization with calcium release from intracellular stores. Activated by increased cytosolic Ca(2+) levels. The polypeptide is Trimeric intracellular cation channel type B (Tmem38b) (Mus musculus (Mouse)).